Consider the following 340-residue polypeptide: KH domain-containing RNA-binding protein QKI (340 aa).

One can recognise a KH domain in the interval 87–153 (YVPVKEYPDF…WEHLNEDLHV (67 aa)). The SH3-binding motif lies at 275–278 (PPGP). A Nuclear localization signal motif is present at residues 323–329 (RVHPYQR).

Belongs to the quaking family. In terms of assembly, homodimer; does not require RNA to homodimerize.

It localises to the cytoplasm. It is found in the nucleus. Functionally, RNA reader protein, which recognizes and binds specific RNAs, thereby regulating RNA metabolic processes, such as pre-mRNA splicing, circular RNA (circRNA) formation, mRNA export, mRNA stability and/or translation. Involved in various cellular processes, such as mRNA storage into stress granules, apoptosis, interferon response, glial cell fate and development. Binds to the 5'-NACUAAY-N(1,20)-UAAY-3' RNA core sequence. Acts as a mRNA modification reader that specifically recognizes and binds mRNA transcripts modified by internal N(7)-methylguanine (m7G). Promotes the formation of circular RNAs (circRNAs): acts by binding to sites flanking circRNA-forming exons. CircRNAs are produced by back-splicing circularization of pre-mRNAs. Required to protect and promote stability of mRNAs which promotes oligodendrocyte differentiation. Acts as an important regulator of muscle development. The sequence is that of KH domain-containing RNA-binding protein QKI from Gallus gallus (Chicken).